The primary structure comprises 241 residues: MAEEQPQVELFVKAGSDGAKIGNCPFSQRLFMVLWLKGVTFNVTTVDTKRRTETVQKLCPGGQLPFLLYGTEVHTDTNKIEEFLEAVLCPPRYPKLAALNPESNTSGLDIFAKFSAYIKNSNPALNDNLEKGLLKALKVLDNYLTSPLPEEVDETSAEDEGISQRKFLDGNELTLADCNLLPKLHIVQVVCKKYRGFTIPEAFRGVHRYLSNAYAREEFASTCPDDEEIELAYEQVARALK.

Ala2 is subject to N-acetylalanine. Positions Ala2–Pro90 are required for insertion into the membrane. Residue Lys13 is modified to N6-acetyllysine. A G-site motif is present at residues Cys24–Ser27. A disulfide bridge links Cys24 with Cys59. The chain crosses the membrane as a helical span at residues Phe26–Val46. The 141-residue stretch at Tyr93–Tyr233 folds into the GST C-terminal domain. Lys119 bears the N6-acetyllysine mark. Position 121 is a phosphoserine (Ser121). Lys131 is modified (N6-acetyllysine). Phosphoserine occurs at positions 156 and 211. Position 233 is a phosphotyrosine (Tyr233).

Belongs to the chloride channel CLIC family. In terms of assembly, monomer. Homodimer (in vitro). Interacts with TRAPPC2. Dimerization requires a conformation change that leads to the exposure of a large hydrophobic surface. In vivo, this may lead to membrane insertion. In terms of tissue distribution, expressed in neonatal and adult cardiomyocytes (at protein level).

It is found in the nucleus. It localises to the nucleus membrane. The protein resides in the cytoplasm. The protein localises to the cell membrane. Its subcellular location is the endoplasmic reticulum. It carries out the reaction L-dehydroascorbate + 2 glutathione = glutathione disulfide + L-ascorbate. The enzyme catalyses chloride(in) = chloride(out). The catalysed reaction is iodide(out) = iodide(in). It catalyses the reaction thiocyanate(in) = thiocyanate(out). It carries out the reaction nitrate(in) = nitrate(out). The enzyme catalyses bromide(in) = bromide(out). The catalysed reaction is fluoride(in) = fluoride(out). Its function is as follows. In the soluble state, catalyzes glutaredoxin-like thiol disulfide exchange reactions with reduced glutathione as electron donor. Reduces selenite and dehydroascorbate and may act as an antioxidant during oxidative stress response. Can insert into membranes and form voltage-dependent multi-ion conductive channels. Membrane insertion seems to be redox-regulated and may occur only under oxidizing conditions. Involved in regulation of the cell cycle. The protein is Chloride intracellular channel protein 1 of Rattus norvegicus (Rat).